The following is a 471-amino-acid chain: Putative multidrug resistance protein MdtD (471 aa).

Helical transmembrane passes span 12-32 (LWIVAFGFFMQSLDTTIVNTA), 49-69 (MVIVSYVLTVAVMLPASGWMA), 72-92 (IGVRNIFFTAIVLFTLGSLFC), 101-123 (LVMSRVLQGVGGAMMVPVGRLTV), 138-158 (FVTLPGQVGPLLGPALGGILV), 165-185 (WIFLINLPVGIVGAIATLWLM), 195-215 (FDIFGFVLLAAGMATLTLALD), 220-240 (LGISTLTLCLLIVIGIVSILW), 265-285 (IGLFGSFVGRLGSGMLPFMTP), 286-306 (VFLQIGLGFSPFHAGLMMIPM), 342-362 (LVFMAVALMGWYYVLPLVLFF), 393-413 (LLSMIMQLSMSVGVTVAGLLL), and 431-451 (VFLYTYLSMAVIIALPALIFA).

Belongs to the major facilitator superfamily. TCR/Tet family.

Its subcellular location is the cell inner membrane. The chain is Putative multidrug resistance protein MdtD from Enterobacter sp. (strain 638).